Reading from the N-terminus, the 244-residue chain is MHNKQLLLAHRGYSFIAPENTKLAFDLAFEYCFDGIELDVHLTKDEQLVIIHDETTLRTALVNKEVEFESLVSLKRDDHSAFFHLKIQFQSILTLKEFLDLYLDKFKLINIEIKTDQKPYLGIEKKLVDLVKGYGKKAIDKILFSSFNFESLQKVYDLDNSYKKGFLFWTKKQFETISTARIQKICQFLHPWTKIYEKYPQMIKKLNLPLNLWTVNSQNKFQQFLADNHVYAQIANKKFEIKIN.

The GP-PDE domain occupies 5–244 (QLLLAHRGYS…ANKKFEIKIN (240 aa)).

This sequence to glycerophosphoryl diester phosphodiesterases (EC 3.1.4.46). The protein to M.genitalium MG385.

This is an uncharacterized protein from Mycoplasma genitalium (strain ATCC 33530 / DSM 19775 / NCTC 10195 / G37) (Mycoplasmoides genitalium).